Here is a 503-residue protein sequence, read N- to C-terminus: Probable cytosol aminopeptidase (503 aa).

The Mn(2+) site is built by K270 and D275. The active site involves K282. The Mn(2+) site is built by D293, D352, and E354. R356 is an active-site residue.

The protein belongs to the peptidase M17 family. Mn(2+) is required as a cofactor.

The protein resides in the cytoplasm. The enzyme catalyses Release of an N-terminal amino acid, Xaa-|-Yaa-, in which Xaa is preferably Leu, but may be other amino acids including Pro although not Arg or Lys, and Yaa may be Pro. Amino acid amides and methyl esters are also readily hydrolyzed, but rates on arylamides are exceedingly low.. It carries out the reaction Release of an N-terminal amino acid, preferentially leucine, but not glutamic or aspartic acids.. Presumably involved in the processing and regular turnover of intracellular proteins. Catalyzes the removal of unsubstituted N-terminal amino acids from various peptides. The polypeptide is Probable cytosol aminopeptidase (Klebsiella pneumoniae subsp. pneumoniae (strain ATCC 700721 / MGH 78578)).